A 393-amino-acid polypeptide reads, in one-letter code: Phospholipase A1-II 1 (393 aa).

Residues 200–220 adopt a coiled-coil conformation; it reads QVLNEIKRLQDMYEHEETSIT. Serine 225 serves as the catalytic Acyl-ester intermediate. Catalysis depends on charge relay system residues serine 225, aspartate 284, and histidine 321.

It belongs to the AB hydrolase superfamily. Lipase family.

The protein resides in the cytoplasm. In terms of biological role, acylhydrolase that catalyzes the hydrolysis of phospholipids at the sn-1 position. The chain is Phospholipase A1-II 1 from Oryza sativa subsp. indica (Rice).